The primary structure comprises 169 residues: Cyclic pyranopterin monophosphate synthase (169 aa).

Residues 83–85 (LCH) and 121–122 (ME) each bind substrate. D136 is an active-site residue.

It belongs to the MoaC family. Homohexamer; trimer of dimers.

It carries out the reaction (8S)-3',8-cyclo-7,8-dihydroguanosine 5'-triphosphate = cyclic pyranopterin phosphate + diphosphate. It functions in the pathway cofactor biosynthesis; molybdopterin biosynthesis. In terms of biological role, catalyzes the conversion of (8S)-3',8-cyclo-7,8-dihydroguanosine 5'-triphosphate to cyclic pyranopterin monophosphate (cPMP). In Rhodospirillum centenum (strain ATCC 51521 / SW), this protein is Cyclic pyranopterin monophosphate synthase.